Here is a 20-residue protein sequence, read N- to C-terminus: Antifungal protein 2 large subunit (20 aa).

The interval 1 to 20 is disordered; it reads PEDPQRRYQEXQREXRXQQE.

In terms of assembly, heterodimer of a large and a small subunit.

In terms of biological role, possesses antifungal activity against P.infestans but not F.graminearum. This chain is Antifungal protein 2 large subunit, found in Malva parviflora (Little mallow).